The primary structure comprises 550 residues: Rab GTPase-activating protein 22 (550 aa).

Positions 1–49 (MKALRRSYTSTSSGNSSSSSSLPSSSSSSLPSSSSSSPPSSNSNSYSNS) are disordered. Residues 7 to 49 (SYTSTSSGNSSSSSSLPSSSSSSLPSSSSSSPPSSNSNSYSNS) are compositionally biased toward low complexity. The 335-residue stretch at 126 to 460 (GVDPSIRAEV…CLWEVMWADQ (335 aa)) folds into the Rab-GAP TBC domain.

In terms of assembly, interacts with AGT1 in peroxisome under biotic stress conditions. Expressed in root meristems, vascular tissues, guard cells, trichomes, styles and receptacles.

It is found in the nucleus. It localises to the peroxisome. Involved in defense response against fungal and bacterial pathogens. Acts as a negative regulator of jasmonate (JA) responses during infection by the soil-born fungal pathogen Verticillium longisporum. Involved in abscisic acid-dependent stomata closure in response to infection by V.longisporum and Pseudomonas syringae. May be a downstream component of brassinosteroid-mediated signaling. The chain is Rab GTPase-activating protein 22 from Arabidopsis thaliana (Mouse-ear cress).